Reading from the N-terminus, the 204-residue chain is Large ribosomal subunit protein eL15 (204 aa).

It belongs to the eukaryotic ribosomal protein eL15 family. Component of the large ribosomal subunit.

The protein resides in the cytoplasm. Functionally, component of the large ribosomal subunit. The ribosome is a large ribonucleoprotein complex responsible for the synthesis of proteins in the cell. This chain is Large ribosomal subunit protein eL15 (rpl15), found in Megalobrama amblycephala (Chinese blunt snout bream).